The following is a 283-amino-acid chain: Phosphatidylglycerol--prolipoprotein diacylglyceryl transferase (283 aa).

A run of 7 helical transmembrane segments spans residues 21-41 (IEVH…FYMA), 62-82 (YFLW…ILIY), 106-126 (FIGI…IASY), 136-156 (LLIY…FGRI), 190-210 (PSQL…VMWA), 218-238 (GLLI…AEFY), and 252-272 (LSMG…ILLY). Arg155 serves as a coordination point for a 1,2-diacyl-sn-glycero-3-phospho-(1'-sn-glycerol).

It belongs to the Lgt family.

The protein resides in the cell inner membrane. The catalysed reaction is L-cysteinyl-[prolipoprotein] + a 1,2-diacyl-sn-glycero-3-phospho-(1'-sn-glycerol) = an S-1,2-diacyl-sn-glyceryl-L-cysteinyl-[prolipoprotein] + sn-glycerol 1-phosphate + H(+). The protein operates within protein modification; lipoprotein biosynthesis (diacylglyceryl transfer). Functionally, catalyzes the transfer of the diacylglyceryl group from phosphatidylglycerol to the sulfhydryl group of the N-terminal cysteine of a prolipoprotein, the first step in the formation of mature lipoproteins. The protein is Phosphatidylglycerol--prolipoprotein diacylglyceryl transferase of Helicobacter acinonychis (strain Sheeba).